A 397-amino-acid polypeptide reads, in one-letter code: MNIHEYQAKALLAQYGAPVSDGRVVTKAEDAKTAAGEMDGPLWVVKAQIHAGGRGKGKFKEADAGEAGGVRLAKSAQEAADEAKKMLGRTLVTHQTGPVGKQVNRIYIEDGSGIETEMYLALLVDRQSSRISFVCSTEGGMDIEEVAASTPEKILSFSVDPATGYQPYHGRRVAFSLGLEGQQVKQCVKLMGQLFTAFQEKDMEMLEINPLIVTDEGNLKVLDAKVSFDGNAVYRHADVASLRDETEEDPKELAASKFDLNYIALDGEIGCMVNGAGLAMATMDIIKLYGAEPANFLDVGGGATKEKVTEAFKIITSDPQVKGIFVNIFGGIMRCDIIAEGVIAAVKEVGLQMPLVVRLEGTNVEKGKEIINNSGLDVIAADDLKDGAQKIVKAVKG.

Residues 9 to 254 (KALLAQYGAP…ETEEDPKELA (246 aa)) form the ATP-grasp domain. Residues Lys46, 53–55 (GRG), Glu109, Ser112, and Glu117 each bind ATP. Residues Asn209 and Asp223 each contribute to the Mg(2+) site. Substrate contacts are provided by residues Asn274 and 331–333 (GIM).

This sequence belongs to the succinate/malate CoA ligase beta subunit family. In terms of assembly, heterotetramer of two alpha and two beta subunits. Mg(2+) is required as a cofactor.

It catalyses the reaction succinate + ATP + CoA = succinyl-CoA + ADP + phosphate. The enzyme catalyses GTP + succinate + CoA = succinyl-CoA + GDP + phosphate. It functions in the pathway carbohydrate metabolism; tricarboxylic acid cycle; succinate from succinyl-CoA (ligase route): step 1/1. In terms of biological role, succinyl-CoA synthetase functions in the citric acid cycle (TCA), coupling the hydrolysis of succinyl-CoA to the synthesis of either ATP or GTP and thus represents the only step of substrate-level phosphorylation in the TCA. The beta subunit provides nucleotide specificity of the enzyme and binds the substrate succinate, while the binding sites for coenzyme A and phosphate are found in the alpha subunit. The protein is Succinate--CoA ligase [ADP-forming] subunit beta of Jannaschia sp. (strain CCS1).